Consider the following 1007-residue polypeptide: Protocadherin alpha-C2 (1007 aa).

Residues 1–42 (MEQAGTRPAATEHPRLRRPMPWLLLLPLLLLLLLLLPGPAAS) form the signal peptide. Cadherin domains are found at residues 43–148 (QLRY…SPRF), 149–257 (PRPN…SPAF), 258–365 (DQST…APEV), 374–469 (VPEN…PPSF), and 470–579 (LEDS…APHI). Residues 43-708 (QLRYSVPEEQ…RTYSEITLYL (666 aa)) are Extracellular-facing. Asn280 and Asn436 each carry an N-linked (GlcNAc...) asparagine glycan. N-linked (GlcNAc...) asparagine glycosylation is found at Asn586 and Asn657. One can recognise a Cadherin 6 domain in the interval 594–691 (GPRTAPAGYL…DRVSKILPDT (98 aa)). A helical transmembrane segment spans residues 709–729 (IIALSTVSFIFLLTIIILSII). Topologically, residues 730–1007 (KCYRYTAYGT…GNSTTDNSDQ (278 aa)) are cytoplasmic. PXXP repeat units lie at residues 856–859 (PRQP), 889–892 (PGGP), 930–933 (PGNP), and 948–951 (PGSP). The 4 X 4 AA repeats of P-X-X-P stretch occupies residues 856–951 (PRQPNPDWRY…PDKFIIPGSP (96 aa)). The tract at residues 885 to 1007 (LRAGPGGPDQ…GNSTTDNSDQ (123 aa)) is disordered. Residues 966 to 980 (DKSDFITFGKKEETK) are compositionally biased toward basic and acidic residues.

It localises to the cell membrane. In terms of biological role, potential calcium-dependent cell-adhesion protein. May be involved in the establishment and maintenance of specific neuronal connections in the brain. The protein is Protocadherin alpha-C2 (PCDHAC2) of Pan troglodytes (Chimpanzee).